Here is a 140-residue protein sequence, read N- to C-terminus: Dehydratase ustZ (140 aa).

The 96-residue stretch at 18-113 (PGISTEDYRN…GPDHEKFADT (96 aa)) folds into the EthD domain.

It belongs to the tpcK family.

The catalysed reaction is naphtopyrone YWA1 = norrubrofusarin + H2O + H(+). Its pathway is secondary metabolite biosynthesis. Its function is as follows. Dehydratase; part of the gene cluster that mediates the biosynthesis of ustilaginoidins, dimeric gamma-naphthopyrones isolated from different fungal species. The first step in the biosynthesis of ustilaginoidins is the production of gamma-naphthopyrone precursor YWA1 by the non-reducing polyketide synthase ustP, via condensation of one acetyl-CoA starter unit with 6 malonyl-CoA units. YWA1 is then probably substrate of the ustZ to yield norrubrofusarin via a dehydration reaction. A key enzyme in the biosynthetic pathway is the laccase ustL, which catalyzes the oxidative dimerization of norrubrofusarin to ustilaginoidin A. It can produce the M- and P-atropisomers in varying amounts, depending on the reaction conditions. For the biosynthesis of 3-methylustilaginoid in derivatives such as chaetochromin A, a methylated derivative of YWA1 is required. The C-methylation is considered to be catalyzed by ustM, the phosphopantetheine attachment site of which indicates that it acts on the growing polyketide chain before release of the product. For the biosynthesis of chaetochromin A, it is assumed that saturation of the D2 double bond takes place before dimerization, and is probably catalyzed by an external reductase because no candidate gene was identified within the cluster. The chain is Dehydratase ustZ from Ustilaginoidea virens (Rice false smut fungus).